The chain runs to 295 residues: Glycine--tRNA ligase alpha subunit (295 aa).

It belongs to the class-II aminoacyl-tRNA synthetase family. As to quaternary structure, tetramer of two alpha and two beta subunits.

The protein resides in the cytoplasm. It catalyses the reaction tRNA(Gly) + glycine + ATP = glycyl-tRNA(Gly) + AMP + diphosphate. The protein is Glycine--tRNA ligase alpha subunit (glyQ) of Bacillus subtilis (strain 168).